The following is a 125-amino-acid chain: Large ribosomal subunit protein bL12 (125 aa).

It belongs to the bacterial ribosomal protein bL12 family. As to quaternary structure, homodimer. Part of the ribosomal stalk of the 50S ribosomal subunit. Forms a multimeric L10(L12)X complex, where L10 forms an elongated spine to which 2 to 4 L12 dimers bind in a sequential fashion. Binds GTP-bound translation factors.

Functionally, forms part of the ribosomal stalk which helps the ribosome interact with GTP-bound translation factors. Is thus essential for accurate translation. The chain is Large ribosomal subunit protein bL12 from Rickettsia felis (strain ATCC VR-1525 / URRWXCal2) (Rickettsia azadi).